The sequence spans 838 residues: Leucine--tRNA ligase (838 aa).

Positions 38-48 (PYPSGKAHVGH) match the 'HIGH' region motif. A 'KMSKS' region motif is present at residues 608 to 612 (KMSKS). K611 lines the ATP pocket.

Belongs to the class-I aminoacyl-tRNA synthetase family.

The protein resides in the cytoplasm. It carries out the reaction tRNA(Leu) + L-leucine + ATP = L-leucyl-tRNA(Leu) + AMP + diphosphate. This is Leucine--tRNA ligase from Orientia tsutsugamushi (strain Boryong) (Rickettsia tsutsugamushi).